The following is a 309-amino-acid chain: Serine/threonine-protein phosphatase 2A catalytic subunit alpha isoform (309 aa).

Mn(2+) contacts are provided by Asp57, His59, Asp85, and Asn117. The Zn(2+) site is built by Asp57, His59, and Asp85. Residues Asp85 and Asn117 each coordinate Fe(3+). His118 (proton donor) is an active-site residue. 2 residues coordinate Mn(2+): His167 and His241. Residues His167 and His241 each contribute to the Fe(3+) site. Residue Tyr307 is modified to Phosphotyrosine. Leu309 is subject to Leucine methyl ester.

It belongs to the PPP phosphatase family. PP-1 subfamily. PP2A consists of a common heterodimeric core enzyme composed of PPP2CA, a 36 kDa catalytic subunit (subunit C), and PPP2R1A, a 65 kDa constant regulatory subunit (PR65 or subunit A), that associates with a variety of regulatory subunits. Proteins that associate with the core dimer include three families of regulatory subunits B (the R2/B/PR55/B55, R3/B''/PR72/PR130/PR59 and R5/B'/B56 families), the 48 kDa variable regulatory subunit, viral proteins, and cell signaling molecules. Interacts with the PP2A A subunit PPP2R1A. Interacts with the regulatory subunit PPP2R2A. Interacts (via C-terminus) with PTPA. Interacts with NXN; the interaction is direct. Interacts with KCTD20. Interacts with BTBD10. Interacts with SGO1 and SGO2. Interacts with RAF1. Interaction with IGBP1 protects unassembled PPP2CA from degradative ubiquitination. Interacts with GSK3B (via C2 domain). Interacts with MFHAS1; retains PPP2CA into the cytoplasm and excludes it from the nucleus. Interacts with PABIR1/FAM122A. Interacts with ADCY8; interaction is phosphatase activity-dependent; antagonizes interaction between ADCY8 and calmodulin. Interacts with CRTC3 (when phosphorylated at 'Ser-391'). Interacts with SPRY2; the interaction is inhibited by TESK1 interaction with SPRY2, possibly by vesicular sequestration of SPRY2. Interacts with TRAF3IP3. Interacts with AMBRA1 (via PxP motifs); enhancing interaction between PPP2CA and MYC or FOXO3. Forms a complex with AMBRA1 and BECN1; AMBRA1 and BECN1 components of the complex regulate MYC stability via different pathways. Part of the core of STRIPAK complexes composed of PP2A catalytic and scaffolding subunits, the striatins (PP2A regulatory subunits), the striatin-associated proteins MOB4, STRIP1 and STRIP2, PDCD10 and members of the STE20 kinases, such as STK24 and STK26. Phosphatase component of the Integrator-PP2A (INTAC) complex, composed of the Integrator core complex and protein phosphatase 2A subunits PPP2CA and PPP2R1A. It depends on Mn(2+) as a cofactor. Requires Fe(3+) as cofactor. Zn(2+) serves as cofactor. Post-translationally, reversibly methyl esterified on Leu-309 by leucine carboxyl methyltransferase 1 (LCMT1) and protein phosphatase methylesterase 1 (PPME1). Carboxyl methylation influences the affinity of the catalytic subunit for the different regulatory subunits, thereby modulating the PP2A holoenzyme's substrate specificity, enzyme activity and cellular localization. Phosphorylation of either threonine (by autophosphorylation-activated protein kinase) or tyrosine results in inactivation of the phosphatase. Auto-dephosphorylation has been suggested as a mechanism for reactivation. In terms of processing, polyubiquitinated, leading to its degradation by the proteasome.

It localises to the cytoplasm. The protein localises to the nucleus. Its subcellular location is the chromosome. It is found in the centromere. The protein resides in the cytoskeleton. It localises to the spindle pole. The catalysed reaction is O-phospho-L-seryl-[protein] + H2O = L-seryl-[protein] + phosphate. It carries out the reaction O-phospho-L-threonyl-[protein] + H2O = L-threonyl-[protein] + phosphate. Its activity is regulated as follows. Inhibited by the interaction between PPP2R2A and ARPP19; this inhibition is enhanced when ARPP19 is phosphorylated. Inhibited by the interaction between PPP2R2A and PABIR1/FAM122A. Functionally, catalytic subunit of protein phosphatase 2A (PP2A), a serine/threonine phosphatase involved in the regulation of a wide variety of enzymes, signal transduction pathways, and cellular events. PP2A is the major phosphatase for microtubule-associated proteins (MAPs). PP2A can modulate the activity of phosphorylase B kinase casein kinase 2, mitogen-stimulated S6 kinase, and MAP-2 kinase. Cooperates with SGO2 to protect centromeric cohesin from separase-mediated cleavage in oocytes specifically during meiosis I. Can dephosphorylate various proteins, such as SV40 large T antigen, AXIN1, p53/TP53, PIM3, WEE1. Activates RAF1 by dephosphorylating it at 'Ser-259'. Mediates dephosphorylation of WEE1, preventing its ubiquitin-mediated proteolysis, increasing WEE1 protein levels, and promoting the G2/M checkpoint. Mediates dephosphorylation of MYC; promoting its ubiquitin-mediated proteolysis: interaction with AMBRA1 enhances interaction between PPP2CA and MYC. Mediates dephosphorylation of FOXO3; promoting its stabilization: interaction with AMBRA1 enhances interaction between PPP2CA and FOXO3. Catalyzes dephosphorylation of the pyrin domain of NLRP3, promoting assembly of the NLRP3 inflammasome. Together with RACK1 adapter, mediates dephosphorylation of AKT1 at 'Ser-473', preventing AKT1 activation and AKT-mTOR signaling pathway. Dephosphorylation of AKT1 is essential for regulatory T-cells (Treg) homeostasis and stability. Catalyzes dephosphorylation of PIM3, promotinh PIM3 ubiquitination and proteasomal degradation. Part of the striatin-interacting phosphatase and kinase (STRIPAK) complexes. STRIPAK complexes have critical roles in protein (de)phosphorylation and are regulators of multiple signaling pathways including Hippo, MAPK, nuclear receptor and cytoskeleton remodeling. Different types of STRIPAK complexes are involved in a variety of biological processes such as cell growth, differentiation, apoptosis, metabolism and immune regulation. Key mediator of a quality checkpoint during transcription elongation as part of the Integrator-PP2A (INTAC) complex. The INTAC complex drives premature transcription termination of transcripts that are unfavorably configured for transcriptional elongation: within the INTAC complex, PPP2CA catalyzes dephosphorylation of the C-terminal domain (CTD) of Pol II subunit POLR2A/RPB1 and SUPT5H/SPT5, thereby preventing transcriptional elongation. This Homo sapiens (Human) protein is Serine/threonine-protein phosphatase 2A catalytic subunit alpha isoform (PPP2CA).